The primary structure comprises 180 residues: MMNVNVLRLDHRIGRDTRITTHVCLTSRAFGASKIYLSGEEDHKLMENVRDTADRWGGNFEIEYAKNYMGVINKWKDNGGKVVHLTMYGSQAHEIVSEVQKSSADILIVVGGAKVPGKVYKSADWNVSVTTQPHSEVSSLAVFQHLLMDGKEFDLEFENPVFEVIPTAHGKNVNIHDENR.

Residue L85 participates in S-adenosyl-L-methionine binding.

It belongs to the aTrm56 family. In terms of assembly, homodimer.

The protein localises to the cytoplasm. It catalyses the reaction cytidine(56) in tRNA + S-adenosyl-L-methionine = 2'-O-methylcytidine(56) in tRNA + S-adenosyl-L-homocysteine + H(+). In terms of biological role, specifically catalyzes the AdoMet-dependent 2'-O-ribose methylation of cytidine at position 56 in tRNAs. This is tRNA (cytidine(56)-2'-O)-methyltransferase from Methanobrevibacter smithii (strain ATCC 35061 / DSM 861 / OCM 144 / PS).